We begin with the raw amino-acid sequence, 340 residues long: Heat-inducible transcription repressor HrcA (340 aa).

It belongs to the HrcA family.

In terms of biological role, negative regulator of class I heat shock genes (grpE-dnaK-dnaJ and groELS operons). Prevents heat-shock induction of these operons. In Burkholderia ambifaria (strain MC40-6), this protein is Heat-inducible transcription repressor HrcA.